The chain runs to 331 residues: F-box protein At2g26160 (331 aa).

Positions 4–52 (PEWSELPGDLINLTANRFSSISDVLRVRSICKPWRSAAATPKSFQCNLP) constitute an F-box domain.

The chain is F-box protein At2g26160 from Arabidopsis thaliana (Mouse-ear cress).